Here is a 699-residue protein sequence, read N- to C-terminus: Ferric reduction oxidase 4 (699 aa).

The Cytoplasmic portion of the chain corresponds to 1 to 9 (MGNMRSLVK). Residues 10 to 29 (TLMVVLFLGWILVWIMISTN) form a helical membrane-spanning segment. Topologically, residues 30–54 (LFKSKWTPKLSKYLNTTYFGPQGTN) are lumenal. The helical transmembrane segment at 55–73 (LVLLTVPMMFIAVLSCVYL) threads the bilayer. Topologically, residues 74–101 (HIQKKPTQPQREWKLKRIMGRVIMVMNP) are cytoplasmic. A helical membrane pass occupies residues 102–125 (LGIVTATELTFSLLFVALLAWSLY). Over 126-190 (NYLYLSYHVH…VGLTSESSIK (65 aa)) the chain is Lumenal. Positions 157 to 275 (GYVGNICWAF…HHLYGLYIVF (119 aa)) constitute a Ferric oxidoreductase domain. Residues 191 to 214 (YHIWLGHVSNFCFLVHTVVFLIYW) form a helical membrane-spanning segment. Heme-binding residues include histidine 192 and histidine 206. Residues 215 to 264 (AMINKLMETFAWNPTYVPNLAGTIAMVIGIAMWVTSLPSFRRKKFEIFFY) lie on the Cytoplasmic side of the membrane. The helical transmembrane segment at 265–289 (THHLYGLYIVFYVIHVGDSWFCMIL) threads the bilayer. Heme contacts are provided by histidine 266 and histidine 279. Residues 290-311 (PNIFLFFIDRYLRFLQSTKRSR) lie on the Lumenal side of the membrane. The 104-residue stretch at 305–408 (QSTKRSRLVS…EGPYGPNSFD (104 aa)) folds into the FAD-binding FR-type domain. A helical membrane pass occupies residues 312 to 332 (LVSARILPSDNLELTFSKTPG). Residues 333 to 525 (LHYTPTSILF…PISPVLGPNN (193 aa)) lie on the Cytoplasmic side of the membrane. An FAD-binding site is contributed by 354-357 (HPFT). 400-403 (GPYG) serves as a coordination point for NAD(+). The helical transmembrane segment at 526–548 (FLWLGVVILSSFVMFLLLIGIVT) threads the bilayer. Topologically, residues 549 to 568 (RYYIYPVDHNTGSIYNFSYR) are lumenal. Residues 569 to 590 (GLWDMFLGSACIFISSSVVFLW) traverse the membrane as a helical segment. At 591–699 (RKKQNKEGDK…LHFEAISFNW (109 aa)) the chain is on the cytoplasmic side.

This sequence belongs to the ferric reductase (FRE) family. Requires FAD as cofactor. Expressed in siliques. Detected at low levels in roots, cotyledon veins and shoots.

It localises to the membrane. It carries out the reaction 2 a Fe(II)-siderophore + NAD(+) + H(+) = 2 a Fe(III)-siderophore + NADH. Ferric chelate reductase. May participate in the transport of electrons to a Fe(3+) ion via FAD and heme intermediates. May function as root surface cupric chelate reductase and participate in the reduction of Cu(2+), for Cu(+) acquisition via Cu(+) transporters in response to copper deficiency. The polypeptide is Ferric reduction oxidase 4 (FRO4) (Arabidopsis thaliana (Mouse-ear cress)).